The primary structure comprises 125 residues: Large ribosomal subunit protein mL51 (125 aa).

The transit peptide at 1-29 directs the protein to the mitochondrion; that stretch reads MWSVQQLLWGCRSLLTQGCRSFSLGSRDL.

This sequence belongs to the mitochondrion-specific ribosomal protein mL51 family. In terms of assembly, component of the mitochondrial ribosome large subunit (39S) which comprises a 16S rRNA and about 50 distinct proteins.

Its subcellular location is the mitochondrion. The polypeptide is Large ribosomal subunit protein mL51 (mrpl51) (Xenopus tropicalis (Western clawed frog)).